The following is a 458-amino-acid chain: MRVVVVVTGLVVVVVATALSLPDHDVKSASSPLSSSSVYQGSSGDDCDEGLPPPDRPFYVVWNHPDTCKRNRIPLHLDHYGFIFNKNRLFLGEEIQTLYNTGLWPNISETGEFFNGGLPQLFTHHDYSETVEILGRYRTENFTGLGILDFEEWRAIYDTNFGIMRKYQDESIKLAKQRYPSYNKKELTMVAEQEWDQAAREIMSTKLAIGQALMPGGHWGYYGYPRTWGSKRNTQLRNNRIDWLWRQSTGLYPSIYIKDPNMTESAIAEFVSGNVEEAVRVQDEFSPPNTPIYPYAMLQSGDHIFFQVDHLKISLGLPAKMGTSGVILWASSNRYKNATRQCSRMRVHIDNVLGPYVENLTQVMADCSTTLCGGHGRCVHNSHDVLLGETDSQRLSGLCTPRHSRFRDYHCRCYSDWEGACCQTVRPSRCHKQQQGNVHEGGDLQEGHVVNVVNPLIG.

A signal peptide spans 1–18 (MRVVVVVTGLVVVVVATA). Positions 24–47 (HDVKSASSPLSSSSVYQGSSGDDC) are disordered. Residues 28-43 (SASSPLSSSSVYQGSS) show a composition bias toward low complexity. Cys-68 and Cys-342 are disulfide-bonded. 2 N-linked (GlcNAc...) asparagine glycosylation sites follow: Asn-106 and Asn-141. Residue Glu-151 is the Proton donor of the active site. Asn-261, Asn-337, and Asn-359 each carry an N-linked (GlcNAc...) asparagine glycan. Residues 363-434 (VMADCSTTLC…VRPSRCHKQQ (72 aa)) enclose the EGF-like domain. 3 cysteine pairs are disulfide-bonded: Cys-367–Cys-378, Cys-372–Cys-411, and Cys-413–Cys-422.

This sequence belongs to the glycosyl hydrolase 56 family. Expressed by the venom duct.

The protein localises to the secreted. The enzyme catalyses Random hydrolysis of (1-&gt;4)-linkages between N-acetyl-beta-D-glucosamine and D-glucuronate residues in hyaluronate.. Its function is as follows. Hyaluronidase catalyzes the hydrolysis of hyaluronic acid (HA), an anionic, nonsulfated glycosaminoglycan distributed widely throughout connective, epithelial, and neural tissues. In venom, they are known to enhance diffusion of the venom by degrading the extracellular matrix. This is Hyaluronidase conohyal-P1 from Conus purpurascens (Purple cone).